Reading from the N-terminus, the 702-residue chain is MADS-box MEF2 type transcription factor MIG1 (702 aa).

An MADS-box domain is found at 1–61 (MGRRKIEIKA…KKLYEYSSGD (61 aa)). Disordered regions lie at residues 73–608 (GGAT…NIDT) and 658–702 (PSFL…KVDS). The segment covering 86–96 (GGDDDDEEEGD) has biased composition (acidic residues). Residues 132 to 144 (ASPPIPNGVPFPP) show a composition bias toward pro residues. Low complexity predominate over residues 145–155 (HGHGVPRGHTP). Polar residues predominate over residues 180 to 195 (GSPQVNGFGFGQQQSM). A compositionally biased stretch (pro residues) spans 201 to 241 (TTMPPHMPPQMAPGPPFPYPQHPQHPPHPPHPPHPPHPQQP). Low complexity-rich tracts occupy residues 273 to 284 (PMGMQRHSVSPP), 326 to 343 (ESPQ…QQPE), and 350 to 371 (EQQQ…QSEP). The segment covering 456-465 (VDESTSNASE) has biased composition (polar residues). Composition is skewed to low complexity over residues 487 to 512 (RASI…SLRA) and 530 to 553 (DGSG…DATS). The segment covering 554 to 567 (QSTRQNDSHSSTNM) has biased composition (polar residues). The span at 587–600 (PPNPFAPKRPPQHP) shows a compositional bias: pro residues. The span at 693–702 (NEPKRVKVDS) shows a compositional bias: basic and acidic residues.

This sequence belongs to the MEF2 family. In terms of assembly, interacts with MAPK MPS1.

It localises to the nucleus. In terms of biological role, transcription factor acting downstream of the MPS1 MAP kinase (MAPK) cascade during conidiation and plant infection. Required for overcoming plant defense responses and the differentiation of secondary infectious hyphae in live plant cells. This is MADS-box MEF2 type transcription factor MIG1 from Pyricularia oryzae (Rice blast fungus).